The chain runs to 216 residues: Small ribosomal subunit protein uS3 (216 aa).

In terms of domain architecture, KH type-2 spans leucine 20–histidine 91.

It belongs to the universal ribosomal protein uS3 family.

This chain is Small ribosomal subunit protein uS3 (RPS3), found in Encephalitozoon cuniculi (strain GB-M1) (Microsporidian parasite).